The primary structure comprises 362 residues: uncharacterized protein (362 aa).

Basic and acidic residues predominate over residues 314 to 323 (GEEKEPKQES). A disordered region spans residues 314–362 (GEEKEPKQESQEQLFNPFTIDEMLTEEQQQQQEEENNATEEEGDTVKLG). Over residues 345–356 (QEEENNATEEEG) the composition is skewed to acidic residues.

This is an uncharacterized protein from Acidianus two-tailed virus (ATV).